Here is a 510-residue protein sequence, read N- to C-terminus: Serine/threonine protein phosphatase 2A 57 kDa regulatory subunit B' kappa isoform (510 aa).

The disordered stretch occupies residues M1 to S51. Over residues G25–S51 the composition is skewed to polar residues. Phosphothreonine is present on residues T476 and T493. S502 bears the Phosphoserine mark. T508 bears the Phosphothreonine mark.

It belongs to the phosphatase 2A regulatory subunit B56 family. In terms of assembly, PP2A consists of a common heteromeric enzyme, composed of a catalytic subunit (subunits C), a constant regulatory subunit (subunit A), and a variety of regulatory subunits such as subunits B (the R2/B/PR55/B55, R3/B''/PR72/PR130/PR59 and R5/B'/B56 families). Interacts with SIT1. Post-translationally, phosphorylated at Thr-476, Thr-493, Ser-502 and Thr-508 by SIT1. In terms of tissue distribution, expressed in root stele and epidermal cells.

The protein localises to the cytoplasm. The protein resides in the cytosol. Its subcellular location is the cell membrane. In terms of biological role, b regulatory subunit of phosphatase 2A (PP2A) involved in salt stress response. Under salt stress conditions, required for the catalytic activity of PP2A and the dephosphorylation of SIT1, a negative regulator of salt tolerance. Dephosphorylation of SIT1 turns off salt-induced SIT1 activity directly, which has a positive effect on salt tolerance. This Oryza sativa subsp. japonica (Rice) protein is Serine/threonine protein phosphatase 2A 57 kDa regulatory subunit B' kappa isoform.